The following is a 902-amino-acid chain: Protein translocase subunit SecA (902 aa).

ATP contacts are provided by residues Q87, G105–T109, and D512. The segment at L851–Q902 is disordered. 4 residues coordinate Zn(2+): C886, C888, C897, and H898. Basic residues predominate over residues K892–Q902.

It belongs to the SecA family. Monomer and homodimer. Part of the essential Sec protein translocation apparatus which comprises SecA, SecYEG and auxiliary proteins SecDF-YajC and YidC. Requires Zn(2+) as cofactor.

It is found in the cell inner membrane. The protein resides in the cytoplasm. The catalysed reaction is ATP + H2O + cellular proteinSide 1 = ADP + phosphate + cellular proteinSide 2.. Its function is as follows. Part of the Sec protein translocase complex. Interacts with the SecYEG preprotein conducting channel. Has a central role in coupling the hydrolysis of ATP to the transfer of proteins into and across the cell membrane, serving both as a receptor for the preprotein-SecB complex and as an ATP-driven molecular motor driving the stepwise translocation of polypeptide chains across the membrane. In Sodalis glossinidius (strain morsitans), this protein is Protein translocase subunit SecA.